A 534-amino-acid polypeptide reads, in one-letter code: Glutamyl-tRNA(Gln) amidotransferase subunit B, mitochondrial (534 aa).

A mitochondrion-targeting transit peptide spans 1–28 (MTVLCRLRHCHLSTPTLCRRFHDARVYK).

It belongs to the GatB/GatE family. GatB subfamily. In terms of assembly, subunit of the heterotrimeric GatCAB amidotransferase (AdT) complex, composed of A, B and C subunits.

The protein resides in the mitochondrion. It carries out the reaction L-glutamyl-tRNA(Gln) + L-glutamine + ATP + H2O = L-glutaminyl-tRNA(Gln) + L-glutamate + ADP + phosphate + H(+). In terms of biological role, allows the formation of correctly charged Gln-tRNA(Gln) through the transamidation of misacylated Glu-tRNA(Gln) in the mitochondria. The reaction takes place in the presence of glutamine and ATP through an activated gamma-phospho-Glu-tRNA(Gln). This is Glutamyl-tRNA(Gln) amidotransferase subunit B, mitochondrial from Laccaria bicolor (strain S238N-H82 / ATCC MYA-4686) (Bicoloured deceiver).